The chain runs to 730 residues: Synaptogenesis protein syg-1 (730 aa).

The N-terminal stretch at 1–18 is a signal peptide; sequence MVRWQTWPLLLLFQLVTC. The Extracellular segment spans residues 19–551; the sequence is QQLQQRIVEA…WIVITAKFDR (533 aa). Ig-like domains follow at residues 23-123, 131-265, 270-352, 357-433, and 441-540; these read QRIV…AKLT, PKIV…VKLS, PQIN…IKLN, ARIM…QILS, and PPTV…RNIL. Disulfide bonds link cysteine 44/cysteine 104, cysteine 152/cysteine 246, cysteine 292/cysteine 336, cysteine 378/cysteine 420, and cysteine 462/cysteine 519. Asparagine 93 and asparagine 206 each carry an N-linked (GlcNAc...) asparagine glycan. A helical transmembrane segment spans residues 552–572; it reads MVALAIISAGVLLVSLLCCLC. Residues 573 to 730 lie on the Cytoplasmic side of the membrane; sequence MCRSNCRSRK…RPISRTSTHV (158 aa).

It belongs to the immunoglobulin superfamily. Interacts with skr-1. Interacts with syg-2. Interacts with the WAVE regulatory complex; the interaction leads to formation of a synaptic F-actin network that is required for synapse formation and axon branching. In terms of tissue distribution, expression in head motor neurons, occasionally in HSN neurons and weakly in other cells in the vulval region. Expressed in the primary synapse region of HSNL motor neuron.

Its subcellular location is the cell membrane. It is found in the cell projection. It localises to the axon. The protein localises to the synapse. Functionally, cell adhesion protein. Involved in synapse formation in the HSNL egg-laying motor neuron. Inhibits assembly of the SCF(sel-10) E3 ubiquitin ligase complex at synapses, and protects them from elimination. Also required for F-actin assembly at the synaptic region and for axon branch formation. This Caenorhabditis elegans protein is Synaptogenesis protein syg-1.